Reading from the N-terminus, the 557-residue chain is MSLEEQQSDDPAELESGVSRGDELAELLGDLVVGREEHLNAPGLVIRPDEVQDALFKLRDEAGFDHLSCVTAQEYEDRYESIYHLTKFDDRTDEVSVVVPTSKDNPVSQSAEPVFRTADWHEREAYDLVGIQYEDHPDLRRILLPETWQGHPLGLDYDQDRPQIATLREHANPLEEDHRAGDSNTMYINIGPHHPATHGVLHVETVVDGEQVVDLESDIGYLHRCEEQMCQQGTYRHQIMPYPDRWDYISSGLLNEWAYARAAEDLADIEVPEYAQIIRTMGAELCRIASHMIALGTFALDVYGDFTAIFMYAMRDREIVQNILEDLTGQRMMFNYFRLGGVVWDLPEPREEFFEKIRDFMDGLPQALEEYHDMITSNEILQARTVGTGVLSPEVAKSYGATGPVARGSGIDYDLRRDDSYGYYDELEWDVVVEDGCDNFSRLLVRMREVEESAKIIQQCVDLLEDWPEDERNIQANVPRTLKPDEDTEIYRAVEGAKGELGIYIRADGTDKPARFKIRSPCFSNLQTLPEMSEGEYIPDMIASLGSLDIVLGEVDR.

The span at Met1 to Glu13 shows a compositional bias: acidic residues. Residues Met1–Arg20 are disordered. The tract at residues Met1–Leu174 is NADH dehydrogenase I subunit C. The interval Asn184–Arg557 is NADH dehydrogenase I subunit D. A Glycyl lysine isopeptide (Lys-Gly) (interchain with G-Cter in SAMP2) cross-link involves residue Lys517.

In the N-terminal section; belongs to the complex I 30 kDa subunit family. The protein in the C-terminal section; belongs to the complex I 49 kDa subunit family. As to quaternary structure, NDH-1 is composed of 13 different subunits. Subunits NuoB, CD, E, F, and G constitute the peripheral sector of the complex.

Its subcellular location is the cell membrane. The enzyme catalyses a quinone + NADH + 5 H(+)(in) = a quinol + NAD(+) + 4 H(+)(out). NDH-1 shuttles electrons from NADH, via FMN and iron-sulfur (Fe-S) centers, to quinones in the respiratory chain. Couples the redox reaction to proton translocation (for every two electrons transferred, four hydrogen ions are translocated across the cytoplasmic membrane), and thus conserves the redox energy in a proton gradient. The protein is NADH-quinone oxidoreductase subunit C/D (nuoCD) of Haloferax volcanii (strain ATCC 29605 / DSM 3757 / JCM 8879 / NBRC 14742 / NCIMB 2012 / VKM B-1768 / DS2) (Halobacterium volcanii).